We begin with the raw amino-acid sequence, 322 residues long: tRNA-modifying protein YgfZ (322 aa).

Folate is bound at residue W182.

The protein belongs to the tRNA-modifying YgfZ family.

Its subcellular location is the cytoplasm. Folate-binding protein involved in regulating the level of ATP-DnaA and in the modification of some tRNAs. It is probably a key factor in regulatory networks that act via tRNA modification, such as initiation of chromosomal replication. The protein is tRNA-modifying protein YgfZ of Vibrio campbellii (strain ATCC BAA-1116).